A 259-amino-acid chain; its full sequence is Putative hydro-lyase Bphyt_4813 (259 aa).

The protein belongs to the D-glutamate cyclase family.

In Paraburkholderia phytofirmans (strain DSM 17436 / LMG 22146 / PsJN) (Burkholderia phytofirmans), this protein is Putative hydro-lyase Bphyt_4813.